The chain runs to 263 residues: Tryptophan synthase alpha chain (263 aa).

Residues Glu-49 and Asp-60 each act as proton acceptor in the active site.

This sequence belongs to the TrpA family. Tetramer of two alpha and two beta chains.

It catalyses the reaction (1S,2R)-1-C-(indol-3-yl)glycerol 3-phosphate + L-serine = D-glyceraldehyde 3-phosphate + L-tryptophan + H2O. Its pathway is amino-acid biosynthesis; L-tryptophan biosynthesis; L-tryptophan from chorismate: step 5/5. Functionally, the alpha subunit is responsible for the aldol cleavage of indoleglycerol phosphate to indole and glyceraldehyde 3-phosphate. This is Tryptophan synthase alpha chain from Cereibacter sphaeroides (strain KD131 / KCTC 12085) (Rhodobacter sphaeroides).